The following is a 230-amino-acid chain: Phosphoribosylformylglycinamidine synthase subunit PurQ (230 aa).

The region spanning 3-230 is the Glutamine amidotransferase type-1 domain; that stretch reads SAIIVFPGTN…LFQSIVESLS (228 aa). Cysteine 87 serves as the catalytic Nucleophile. Catalysis depends on residues histidine 204 and glutamate 206.

Part of the FGAM synthase complex composed of 1 PurL, 1 PurQ and 2 PurS subunits.

It is found in the cytoplasm. The catalysed reaction is N(2)-formyl-N(1)-(5-phospho-beta-D-ribosyl)glycinamide + L-glutamine + ATP + H2O = 2-formamido-N(1)-(5-O-phospho-beta-D-ribosyl)acetamidine + L-glutamate + ADP + phosphate + H(+). The enzyme catalyses L-glutamine + H2O = L-glutamate + NH4(+). The protein operates within purine metabolism; IMP biosynthesis via de novo pathway; 5-amino-1-(5-phospho-D-ribosyl)imidazole from N(2)-formyl-N(1)-(5-phospho-D-ribosyl)glycinamide: step 1/2. Part of the phosphoribosylformylglycinamidine synthase complex involved in the purines biosynthetic pathway. Catalyzes the ATP-dependent conversion of formylglycinamide ribonucleotide (FGAR) and glutamine to yield formylglycinamidine ribonucleotide (FGAM) and glutamate. The FGAM synthase complex is composed of three subunits. PurQ produces an ammonia molecule by converting glutamine to glutamate. PurL transfers the ammonia molecule to FGAR to form FGAM in an ATP-dependent manner. PurS interacts with PurQ and PurL and is thought to assist in the transfer of the ammonia molecule from PurQ to PurL. This Rhodospirillum rubrum (strain ATCC 11170 / ATH 1.1.1 / DSM 467 / LMG 4362 / NCIMB 8255 / S1) protein is Phosphoribosylformylglycinamidine synthase subunit PurQ.